A 699-amino-acid chain; its full sequence is MAREVPIEKLRNIGIVAHIDAGKTTTTERILYYTGKTYKIGEVHEGAATMDWMPQEKERGITITVATTACYWTRNGERYQINIIDTPGHVDFSVEVVRSMKVLDGIVFIFSAVEGVQPQSEANWRWADRFQVPRIAFINKMDRLGADFYRVFKEIEEKLTIKPVAIQIPLGAEDQFEGVIDLMEMKAIRWLEETLGAKYEVVDIPPEYQEKAQEWREKMIETIVETDDELMEKYLEGQEISIDELRKALRKATIERKLVPVLCGSAFKNKGVQPLLDAVIDYLPSPIDLPPVKGTNPKTGEEEVRHPSDDEPFCAYAFKVMSDPYAGQLTYIRVFSGTLKAGSYVYNATKDEKQRAGRLLLMHANSREEIQQVSAGEICAVVGLDAATGDTLCDEKHPIILEKLEFPDPVISMAIEPKTKKDQEKLSQVLNKFMKEDPTFRATTDPETGQILIHGMGELHLEIMVDRMKREYGIEVNVGKPQVAYKETIRKKAIGEGKFIKQTGGRGQYGHAIIEIEPLPRGAGFEFIDDIHGGVIPKEFIPSVEKGVKEAMQNGILAGYPVVDVRVRLFDGSYHEVDSSDIAFQVAGSLAFKDAAKKADPVLLEPIMEVEVETPEKYVGDVIGDLNSRRGKIMGMENKGVITVIKAHVPLAEMFGYATTLRSLTQGRGTFIMKFSHYDEVPQQIAEKIIGERMAGKSS.

Positions 8–287 constitute a tr-type G domain; it reads EKLRNIGIVA…AVIDYLPSPI (280 aa). Residues 17-24, 85-89, and 139-142 contribute to the GTP site; these read AHIDAGKT, DTPGH, and NKMD.

Belongs to the TRAFAC class translation factor GTPase superfamily. Classic translation factor GTPase family. EF-G/EF-2 subfamily.

It is found in the cytoplasm. Functionally, catalyzes the GTP-dependent ribosomal translocation step during translation elongation. During this step, the ribosome changes from the pre-translocational (PRE) to the post-translocational (POST) state as the newly formed A-site-bound peptidyl-tRNA and P-site-bound deacylated tRNA move to the P and E sites, respectively. Catalyzes the coordinated movement of the two tRNA molecules, the mRNA and conformational changes in the ribosome. The chain is Elongation factor G (fusA) from Aquifex aeolicus (strain VF5).